The chain runs to 138 residues: Ribulose bisphosphate carboxylase small subunit (138 aa).

It belongs to the RuBisCO small chain family. In terms of assembly, heterohexadecamer of 8 large and 8 small subunits.

The protein localises to the plastid. Its subcellular location is the chloroplast. In terms of biological role, ruBisCO catalyzes two reactions: the carboxylation of D-ribulose 1,5-bisphosphate, the primary event in carbon dioxide fixation, as well as the oxidative fragmentation of the pentose substrate in the photorespiration process. Both reactions occur simultaneously and in competition at the same active site. Although the small subunit is not catalytic it is essential for maximal activity. The polypeptide is Ribulose bisphosphate carboxylase small subunit (Porphyridium aerugineum (Red microalga)).